The primary structure comprises 254 residues: 3-oxo-5-alpha-steroid 4-dehydrogenase 2 (254 aa).

Transmembrane regions (helical) follow at residues 8–28 (VPVL…LCFG), 72–92 (PRSL…AHYF), 146–166 (FSVG…SDCM), and 206–226 (LATW…FLGM).

It belongs to the steroid 5-alpha reductase family.

The protein localises to the microsome membrane. It localises to the endoplasmic reticulum membrane. The enzyme catalyses a 3-oxo-5alpha-steroid + NADP(+) = a 3-oxo-Delta(4)-steroid + NADPH + H(+). It catalyses the reaction 17beta-hydroxy-5alpha-androstan-3-one + NADP(+) = testosterone + NADPH + H(+). It carries out the reaction 5alpha-pregnane-3,20-dione + NADP(+) = progesterone + NADPH + H(+). Converts testosterone (T) into 5-alpha-dihydrotestosterone (DHT) and progesterone or corticosterone into their corresponding 5-alpha-3-oxosteroids. It plays a central role in sexual differentiation and androgen physiology. This Mus musculus (Mouse) protein is 3-oxo-5-alpha-steroid 4-dehydrogenase 2 (Srd5a2).